Here is a 787-residue protein sequence, read N- to C-terminus: Endonuclease MutS2 (787 aa).

331–338 (GPNTGGKT) is a binding site for ATP. One can recognise a Smr domain in the interval 711 to 786 (IDVRGKTSDD…EQGVTIVELR (76 aa)).

Belongs to the DNA mismatch repair MutS family. MutS2 subfamily. As to quaternary structure, homodimer. Binds to stalled ribosomes, contacting rRNA.

In terms of biological role, endonuclease that is involved in the suppression of homologous recombination and thus may have a key role in the control of bacterial genetic diversity. Acts as a ribosome collision sensor, splitting the ribosome into its 2 subunits. Detects stalled/collided 70S ribosomes which it binds and splits by an ATP-hydrolysis driven conformational change. Acts upstream of the ribosome quality control system (RQC), a ribosome-associated complex that mediates the extraction of incompletely synthesized nascent chains from stalled ribosomes and their subsequent degradation. Probably generates substrates for RQC. The sequence is that of Endonuclease MutS2 from Caldicellulosiruptor saccharolyticus (strain ATCC 43494 / DSM 8903 / Tp8T 6331).